A 349-amino-acid chain; its full sequence is GDP-mannose:glycolipid 4-beta-D-mannosyltransferase (349 aa).

An N-terminal signal peptide occupies residues 1–14 (MSASASLPVTRAAA).

The protein belongs to the glycosyltransferase 94 family.

Its subcellular location is the cell inner membrane. It carries out the reaction beta-D-GlcA-(1-&gt;2)-alpha-D-Man-(1-&gt;3)-beta-D-Glc-(1-&gt;4)-alpha-D-Glc-di-trans,octa-cis-undecaprenyl diphosphate + GDP-alpha-D-mannose = beta-D-Man-(1-&gt;4)-beta-D-GlcA-(1-&gt;2)-alpha-D-Man-(1-&gt;3)-beta-D-Glc-(1-&gt;4)-alpha-D-Glc-di-trans,octa-cis-undecaprenyl diphosphate + GDP + H(+). It participates in glycan biosynthesis; xanthan biosynthesis. Functionally, nonprocessive beta-mannosyltransferase that catalyzes the transfer of a mannose residue from GDP-mannose to glucuronic acid-beta-1,2-mannose-alpha-1,3-glucose-beta-1,4-glucose-PP-polyisoprenyl to form the lipid-linked pentasaccharide repeating unit of xanthan, Man-GlcA-Man-Glc(2)-PP-Pol. Is involved in the biosynthesis of the exopolysaccharide xanthan. The sequence is that of GDP-mannose:glycolipid 4-beta-D-mannosyltransferase (gumI) from Xanthomonas campestris pv. campestris (strain ATCC 33913 / DSM 3586 / NCPPB 528 / LMG 568 / P 25).